Consider the following 540-residue polypeptide: 2-isopropylmalate synthase (540 aa).

Positions 8 to 271 (VLIFDTTLRD…NPFFGREEDS (264 aa)) constitute a Pyruvate carboxyltransferase domain. Residues Asp-17, His-208, His-210, and Asn-244 each coordinate Mn(2+). The tract at residues 408-540 (QLKLVQVSCG…PVVLESRPTL (133 aa)) is regulatory domain.

The protein belongs to the alpha-IPM synthase/homocitrate synthase family. LeuA type 1 subfamily. In terms of assembly, homodimer. Mn(2+) serves as cofactor.

It is found in the cytoplasm. It catalyses the reaction 3-methyl-2-oxobutanoate + acetyl-CoA + H2O = (2S)-2-isopropylmalate + CoA + H(+). The protein operates within amino-acid biosynthesis; L-leucine biosynthesis; L-leucine from 3-methyl-2-oxobutanoate: step 1/4. Functionally, catalyzes the condensation of the acetyl group of acetyl-CoA with 3-methyl-2-oxobutanoate (2-ketoisovalerate) to form 3-carboxy-3-hydroxy-4-methylpentanoate (2-isopropylmalate). The protein is 2-isopropylmalate synthase of Synechococcus sp. (strain CC9605).